The following is a 409-amino-acid chain: Glutamyl-tRNA reductase (409 aa).

Substrate-binding positions include 48 to 51, Ser-89, 94 to 96, and Gln-100; these read TCNR and ENE. The Nucleophile role is filled by Cys-49. 165–170 lines the NADP(+) pocket; that stretch reads GNGMLA.

It belongs to the glutamyl-tRNA reductase family. As to quaternary structure, homodimer.

The enzyme catalyses (S)-4-amino-5-oxopentanoate + tRNA(Glu) + NADP(+) = L-glutamyl-tRNA(Glu) + NADPH + H(+). Its pathway is porphyrin-containing compound metabolism; protoporphyrin-IX biosynthesis; 5-aminolevulinate from L-glutamyl-tRNA(Glu): step 1/2. Catalyzes the NADPH-dependent reduction of glutamyl-tRNA(Glu) to glutamate 1-semialdehyde (GSA). The polypeptide is Glutamyl-tRNA reductase (Thermoplasma volcanium (strain ATCC 51530 / DSM 4299 / JCM 9571 / NBRC 15438 / GSS1)).